Here is a 206-residue protein sequence, read N- to C-terminus: LexA repressor (206 aa).

The segment at residues 28–48 (VREICAAVGLSSTSTVHGHLT) is a DNA-binding region (H-T-H motif). Residues S127 and K165 each act as for autocatalytic cleavage activity in the active site.

This sequence belongs to the peptidase S24 family. Homodimer.

It carries out the reaction Hydrolysis of Ala-|-Gly bond in repressor LexA.. Represses a number of genes involved in the response to DNA damage (SOS response), including recA and lexA. In the presence of single-stranded DNA, RecA interacts with LexA causing an autocatalytic cleavage which disrupts the DNA-binding part of LexA, leading to derepression of the SOS regulon and eventually DNA repair. This is LexA repressor from Lactobacillus delbrueckii subsp. bulgaricus (strain ATCC 11842 / DSM 20081 / BCRC 10696 / JCM 1002 / NBRC 13953 / NCIMB 11778 / NCTC 12712 / WDCM 00102 / Lb 14).